Reading from the N-terminus, the 100-residue chain is Aspartyl/glutamyl-tRNA(Asn/Gln) amidotransferase subunit C (100 aa).

This sequence belongs to the GatC family. As to quaternary structure, heterotrimer of A, B and C subunits.

The catalysed reaction is L-glutamyl-tRNA(Gln) + L-glutamine + ATP + H2O = L-glutaminyl-tRNA(Gln) + L-glutamate + ADP + phosphate + H(+). It carries out the reaction L-aspartyl-tRNA(Asn) + L-glutamine + ATP + H2O = L-asparaginyl-tRNA(Asn) + L-glutamate + ADP + phosphate + 2 H(+). Allows the formation of correctly charged Asn-tRNA(Asn) or Gln-tRNA(Gln) through the transamidation of misacylated Asp-tRNA(Asn) or Glu-tRNA(Gln) in organisms which lack either or both of asparaginyl-tRNA or glutaminyl-tRNA synthetases. The reaction takes place in the presence of glutamine and ATP through an activated phospho-Asp-tRNA(Asn) or phospho-Glu-tRNA(Gln). This Corynebacterium aurimucosum (strain ATCC 700975 / DSM 44827 / CIP 107346 / CN-1) (Corynebacterium nigricans) protein is Aspartyl/glutamyl-tRNA(Asn/Gln) amidotransferase subunit C.